A 185-amino-acid polypeptide reads, in one-letter code: Pericyclase pydY (185 aa).

Belongs to the pericyclase pydY family.

It participates in mycotoxin biosynthesis. Functionally, pericyclase; part of the gene cluster that mediates the biosynthesis of pyrrocidines, fungal natural products containing a macrocyclic para-cyclophane connected to a decahydrofluorene ring system that show potent antibiotic activities toward Gram-negative bacteria. Within the pathway, pydY is involved in the late Diels-Alder cycloaddition step that leads to the formation of the decahydrofluorene core. The pathway begins with the PKS-NRPS pydA which, with the help of the trans-enoyl reductase pydC, synthesizes the polyketide-tyrosyl acyl thioester product which can be reductively off-loaded by the terminal reductase (R) domain in pydA. The alpha/beta hydrolase pydG is then required to catalyze the subsequent Knoevenagel condensation that affords the 3-pyrrolin-2-one ring, whereas the four proteins pydB, pydE, pydX and pydZ then function synergistically to form the cyclophane. PydB and the membrane-bound pydX and pydZ are lipid-binding proteins that can sequester and mold the pdyG product into the inverse S-shape. Binding of the medium chain reductase pydE to the complex would trigger the cascade oxidative cyclization. PydY is involved in the Diels-Alder cycloaddition that forms the decahydrofluorene core. Additional non-enzymatic hydroxylation yields pyrrocidine A2 which can be further reduced into pyrrocidine B by an endogenous reductase. This chain is Pericyclase pydY, found in Acremonium sp.